Reading from the N-terminus, the 506-residue chain is Lysine--tRNA ligase (506 aa).

2 residues coordinate Mg(2+): glutamate 416 and glutamate 423.

The protein belongs to the class-II aminoacyl-tRNA synthetase family. Homodimer. Requires Mg(2+) as cofactor.

It is found in the cytoplasm. The catalysed reaction is tRNA(Lys) + L-lysine + ATP = L-lysyl-tRNA(Lys) + AMP + diphosphate. The protein is Lysine--tRNA ligase of Xylella fastidiosa (strain M23).